Reading from the N-terminus, the 76-residue chain is Histone H2A (76 aa).

Residues 1–23 (MSGRGKTGGKARAKAKTRSSRAG) are disordered. S2 carries the N-acetylserine; in acipensins modification. S2 bears the N-acetylserine; in histone H2A mark. Phosphoserine; in histone H2A is present on S2. Residue K6 is modified to N6-(2-hydroxyisobutyryl)lysine. N6-acetyllysine; in histone H2A is present on K6. Residues 7–19 (TGGKARAKAKTRS) show a composition bias toward basic residues. K10 bears the N6-(2-hydroxyisobutyryl)lysine; alternate mark. K10 carries the post-translational modification N6-lactoyllysine; alternate. K10 carries the post-translational modification N6-succinyllysine. Residues K14 and K16 each participate in a glycyl lysine isopeptide (Lys-Gly) (interchain with G-Cter in ubiquitin); in histone H2A cross-link. An N6-(2-hydroxyisobutyryl)lysine; alternate modification is found at K37. An N6-(2-hydroxyisobutyryl)lysine mark is found at K65 and K66.

Belongs to the histone H2A family. The nucleosome is a histone octamer containing two molecules each of H2A, H2B, H3 and H4 assembled in one H3-H4 heterotetramer and two H2A-H2B heterodimers. The octamer wraps approximately 147 bp of DNA. Phosphorylation on Ser-2 is enhanced during mitosis. Phosphorylation on Ser-2 directly represses transcription.

The protein localises to the nucleus. It localises to the chromosome. Functionally, core component of nucleosome. Nucleosomes wrap and compact DNA into chromatin, limiting DNA accessibility to the cellular machineries which require DNA as a template. Histones thereby play a central role in transcription regulation, DNA repair, DNA replication and chromosomal stability. DNA accessibility is regulated via a complex set of post-translational modifications of histones, also called histone code, and nucleosome remodeling. Its function is as follows. Acipensins are antimicrobial peptides. Acipensins 1 and 2 have antibacterial activity against Gram-positive bacteria L.monocytogenes EGD (MIC are 1.1 uM and 1.0 uM, respectively) and S.aureus ATCC 33591 (MIC are 0.9 uM and 0.6 uM, respectively), against Gram-negative bacterium E.coli ML-35p (MIC are 0.7 uM and 0.3 uM, respectively) and antifungal activity against C.albicans 820 (MIC are 1.0 uM and 0.9 uM, respectively). Acipensin 6 has antibacterial activity against Gram-negative bacterium E.coli ML-35p (MIC=2.5 uM). Antimicrobial activity is reduced by high ionic strength. Acipensins 1, 2 and 6 have no hemolytic (up to 40 uM) or cytotoxic (up to 20 uM) effects on human cells in vitro. This chain is Histone H2A, found in Acipenser gueldenstaedtii (Russian sturgeon).